We begin with the raw amino-acid sequence, 511 residues long: 2,3-bisphosphoglycerate-independent phosphoglycerate mutase (511 aa).

Asp12 is a Mn(2+) binding site. Position 36 is a phosphotyrosine (Tyr36). Ser62 contributes to the Mn(2+) binding site. The active-site Phosphoserine intermediate is Ser62. Residues His123, 153–154, Arg185, Arg191, 261–264, and Lys336 each bind substrate; these read RD and RPDR. Residues Asp403, His407, Asp444, His445, and His462 each contribute to the Mn(2+) site.

It belongs to the BPG-independent phosphoglycerate mutase family. As to quaternary structure, monomer. Mn(2+) is required as a cofactor.

The enzyme catalyses (2R)-2-phosphoglycerate = (2R)-3-phosphoglycerate. Its pathway is carbohydrate degradation; glycolysis; pyruvate from D-glyceraldehyde 3-phosphate: step 3/5. Could be inhibited during sporulation by acidification of the forespore, thus allowing accumulation of the spore's large depot of 3-phosphoglyceric acid. Functionally, essential for rapid growth and for sporulation. Catalyzes the interconversion of 2-phosphoglycerate (2-PGA) and 3-phosphoglycerate (3-PGA). The sequence is that of 2,3-bisphosphoglycerate-independent phosphoglycerate mutase from Geobacillus stearothermophilus (Bacillus stearothermophilus).